A 264-amino-acid chain; its full sequence is tRNA pseudouridine synthase A (264 aa).

Catalysis depends on Asp-52, which acts as the Nucleophile. Position 110 (Tyr-110) interacts with substrate.

Belongs to the tRNA pseudouridine synthase TruA family. Homodimer.

It catalyses the reaction uridine(38/39/40) in tRNA = pseudouridine(38/39/40) in tRNA. Functionally, formation of pseudouridine at positions 38, 39 and 40 in the anticodon stem and loop of transfer RNAs. This is tRNA pseudouridine synthase A from Wigglesworthia glossinidia brevipalpis.